We begin with the raw amino-acid sequence, 399 residues long: Elongation factor Tu (399 aa).

In terms of domain architecture, tr-type G spans lysine 10–threonine 209. The tract at residues glycine 19 to threonine 26 is G1. GTP is bound at residue glycine 19–threonine 26. Residue threonine 26 coordinates Mg(2+). The tract at residues glycine 60 to alanine 64 is G2. Residues aspartate 81–glycine 84 are G3. GTP-binding positions include aspartate 81 to histidine 85 and asparagine 136 to aspartate 139. Positions asparagine 136–aspartate 139 are G4. A G5 region spans residues serine 174–lysine 176.

It belongs to the TRAFAC class translation factor GTPase superfamily. Classic translation factor GTPase family. EF-Tu/EF-1A subfamily. Monomer.

The protein resides in the cytoplasm. It carries out the reaction GTP + H2O = GDP + phosphate + H(+). In terms of biological role, GTP hydrolase that promotes the GTP-dependent binding of aminoacyl-tRNA to the A-site of ribosomes during protein biosynthesis. The chain is Elongation factor Tu from Sulfurimonas denitrificans (strain ATCC 33889 / DSM 1251) (Thiomicrospira denitrificans (strain ATCC 33889 / DSM 1251)).